Consider the following 123-residue polypeptide: Large ribosomal subunit protein uL14 (123 aa).

This sequence belongs to the universal ribosomal protein uL14 family. As to quaternary structure, part of the 50S ribosomal subunit. Forms a cluster with proteins L3 and L19. In the 70S ribosome, L14 and L19 interact and together make contacts with the 16S rRNA in bridges B5 and B8.

Its function is as follows. Binds to 23S rRNA. Forms part of two intersubunit bridges in the 70S ribosome. The chain is Large ribosomal subunit protein uL14 from Erwinia tasmaniensis (strain DSM 17950 / CFBP 7177 / CIP 109463 / NCPPB 4357 / Et1/99).